A 467-amino-acid chain; its full sequence is Pup--protein ligase (467 aa).

Glutamate 12 provides a ligand contact to Mg(2+). Position 56 (arginine 56) interacts with ATP. Tyrosine 58 contributes to the Mg(2+) binding site. Aspartate 60 functions as the Proton acceptor in the catalytic mechanism. Glutamate 66 contacts Mg(2+). ATP contacts are provided by threonine 69 and tryptophan 431.

This sequence belongs to the Pup ligase/Pup deamidase family. Pup-conjugating enzyme subfamily.

The catalysed reaction is ATP + [prokaryotic ubiquitin-like protein]-L-glutamate + [protein]-L-lysine = ADP + phosphate + N(6)-([prokaryotic ubiquitin-like protein]-gamma-L-glutamyl)-[protein]-L-lysine.. Its pathway is protein degradation; proteasomal Pup-dependent pathway. The protein operates within protein modification; protein pupylation. Its function is as follows. Catalyzes the covalent attachment of the prokaryotic ubiquitin-like protein modifier Pup to the proteasomal substrate proteins, thereby targeting them for proteasomal degradation. This tagging system is termed pupylation. The ligation reaction involves the side-chain carboxylate of the C-terminal glutamate of Pup and the side-chain amino group of a substrate lysine. This is Pup--protein ligase from Corynebacterium jeikeium (strain K411).